We begin with the raw amino-acid sequence, 240 residues long: Large ribosomal subunit protein uL3 (240 aa).

Disordered stretches follow at residues 138 to 158 (SISHRSHGSTGGRQDPGKTFK) and 215 to 240 (EAPLPGKFRLANEGAEPAPATESAEG). The residue at position 151 (Gln151) is an N5-methylglutamine.

The protein belongs to the universal ribosomal protein uL3 family. Part of the 50S ribosomal subunit. Forms a cluster with proteins L14 and L19. Post-translationally, methylated by PrmB.

One of the primary rRNA binding proteins, it binds directly near the 3'-end of the 23S rRNA, where it nucleates assembly of the 50S subunit. The polypeptide is Large ribosomal subunit protein uL3 (Beijerinckia indica subsp. indica (strain ATCC 9039 / DSM 1715 / NCIMB 8712)).